We begin with the raw amino-acid sequence, 637 residues long: 1-deoxy-D-xylulose-5-phosphate synthase (637 aa).

Residues H72 and G113–A115 each bind thiamine diphosphate. D144 contributes to the Mg(2+) binding site. Thiamine diphosphate contacts are provided by residues G145 to A146, N174, Y287, and E370. Position 174 (N174) interacts with Mg(2+).

Belongs to the transketolase family. DXPS subfamily. In terms of assembly, homodimer. It depends on Mg(2+) as a cofactor. Requires thiamine diphosphate as cofactor.

It catalyses the reaction D-glyceraldehyde 3-phosphate + pyruvate + H(+) = 1-deoxy-D-xylulose 5-phosphate + CO2. It functions in the pathway metabolic intermediate biosynthesis; 1-deoxy-D-xylulose 5-phosphate biosynthesis; 1-deoxy-D-xylulose 5-phosphate from D-glyceraldehyde 3-phosphate and pyruvate: step 1/1. Catalyzes the acyloin condensation reaction between C atoms 2 and 3 of pyruvate and glyceraldehyde 3-phosphate to yield 1-deoxy-D-xylulose-5-phosphate (DXP). The sequence is that of 1-deoxy-D-xylulose-5-phosphate synthase from Prochlorococcus marinus subsp. pastoris (strain CCMP1986 / NIES-2087 / MED4).